We begin with the raw amino-acid sequence, 2234 residues long: Bridge-like lipid transfer protein family member 2 (2234 aa).

Residues 1 to 31 (MPLFLSALLVLLLVALSALFLGRWLVVRLAT) form the signal peptide. The interval 29-108 (LATRWCQRKL…LQKVSSLSAP (80 aa)) is transmembrane domain. S563 bears the Phosphoserine mark. Residues 1496 to 1529 (QMSAKKPKRGIPPSAQVPPHVSTPSFSGRPDKGS) are disordered. The stretch at 1814-1885 (ILHLQEAVRQ…LNILIRCFKD (72 aa)) forms a coiled coil. Residues S1846 and S2090 each carry the phosphoserine modification.

This sequence belongs to the SABRE family.

The protein localises to the cell membrane. Its subcellular location is the endoplasmic reticulum membrane. The protein resides in the mitochondrion membrane. Its function is as follows. Tube-forming lipid transport protein which binds to phosphatidylinositols and affects phosphatidylinositol-4,5-bisphosphate (PtdIns-4,5-P2) distribution. In Mus musculus (Mouse), this protein is Bridge-like lipid transfer protein family member 2 (Bltp2).